The following is a 166-amino-acid chain: Putative 4-hydroxy-4-methyl-2-oxoglutarate aldolase (166 aa).

Substrate is bound by residues 81–84 and Arg-103; that span reads GDII. Residue Asp-104 participates in a divalent metal cation binding.

It belongs to the class II aldolase/RraA-like family. Homotrimer. A divalent metal cation is required as a cofactor.

It carries out the reaction 4-hydroxy-4-methyl-2-oxoglutarate = 2 pyruvate. The enzyme catalyses oxaloacetate + H(+) = pyruvate + CO2. Its function is as follows. Catalyzes the aldol cleavage of 4-hydroxy-4-methyl-2-oxoglutarate (HMG) into 2 molecules of pyruvate. Also contains a secondary oxaloacetate (OAA) decarboxylase activity due to the common pyruvate enolate transition state formed following C-C bond cleavage in the retro-aldol and decarboxylation reactions. The polypeptide is Putative 4-hydroxy-4-methyl-2-oxoglutarate aldolase (Corynebacterium glutamicum (strain ATCC 13032 / DSM 20300 / JCM 1318 / BCRC 11384 / CCUG 27702 / LMG 3730 / NBRC 12168 / NCIMB 10025 / NRRL B-2784 / 534)).